The sequence spans 347 residues: GMP reductase (347 aa).

Residue 108 to 131 coordinates NADP(+); it reads ADFDKMKQILALSPALKFICIDVA. 2 residues coordinate K(+): Gly-181 and Gly-183. The active-site Thioimidate intermediate is Cys-186. Residue 216 to 239 participates in NADP(+) binding; that stretch reads IVSDGGCSVPGDVAKAFGGGADFV.

The protein belongs to the IMPDH/GMPR family. GuaC type 1 subfamily. Homotetramer.

It carries out the reaction IMP + NH4(+) + NADP(+) = GMP + NADPH + 2 H(+). In terms of biological role, catalyzes the irreversible NADPH-dependent deamination of GMP to IMP. It functions in the conversion of nucleobase, nucleoside and nucleotide derivatives of G to A nucleotides, and in maintaining the intracellular balance of A and G nucleotides. This is GMP reductase from Yersinia enterocolitica serotype O:8 / biotype 1B (strain NCTC 13174 / 8081).